The chain runs to 300 residues: Protein phosphatase 2C 1 (300 aa).

The PPM-type phosphatase domain maps to 23–298; sequence IFAASEMQGW…DNMTTILVYL (276 aa). Residues Asp-57, Gly-58, Asp-237, and Asp-289 each contribute to the Mn(2+) site.

Belongs to the PP2C family. Mg(2+) is required as a cofactor. Requires Mn(2+) as cofactor. Post-translationally, the N-terminus is blocked.

The protein resides in the membrane. The catalysed reaction is O-phospho-L-seryl-[protein] + H2O = L-seryl-[protein] + phosphate. It catalyses the reaction O-phospho-L-threonyl-[protein] + H2O = L-threonyl-[protein] + phosphate. In terms of biological role, serine and threonine phosphatase. In Paramecium tetraurelia, this protein is Protein phosphatase 2C 1.